The following is a 373-amino-acid chain: Muscleblind-like protein 2 (373 aa).

4 C3H1-type zinc fingers span residues 13-41, 47-73, 176-204, and 212-238; these read WLTL…HPPK, NGRV…HPPT, TDKL…HPAD, and DNTV…HPPA.

The protein belongs to the muscleblind family. As to quaternary structure, interacts with ITGA3.

It localises to the nucleus. Its subcellular location is the cytoplasm. Functionally, mediates pre-mRNA alternative splicing regulation. Acts either as activator or repressor of splicing on specific pre-mRNA targets. Inhibits cardiac troponin-T (TNNT2) pre-mRNA exon inclusion but induces insulin receptor (IR) pre-mRNA exon inclusion in muscle. Antagonizes the alternative splicing activity pattern of CELF proteins. RNA-binding protein that binds to 5'ACACCC-3' core sequence, termed zipcode, within the 3'UTR of ITGA3. Binds to CUG triplet repeat expansion in myotonic dystrophy muscle cells by sequestering the target RNAs. Together with RNA binding proteins RBPMS and RBFOX2, activates vascular smooth muscle cells alternative splicing events. Regulates NCOR2 alternative splicing. Seems to regulate expression and localization of ITGA3 by transporting it from the nucleus to cytoplasm at adhesion plaques. May play a role in myotonic dystrophy pathophysiology (DM). This is Muscleblind-like protein 2 (Mbnl2) from Mus musculus (Mouse).